Consider the following 430-residue polypeptide: UPF0597 protein Clos_2050 (430 aa).

The protein belongs to the UPF0597 family.

The sequence is that of UPF0597 protein Clos_2050 from Alkaliphilus oremlandii (strain OhILAs) (Clostridium oremlandii (strain OhILAs)).